An 880-amino-acid polypeptide reads, in one-letter code: Valine--tRNA ligase (880 aa).

The 'HIGH' region motif lies at 48–58 (PNVTGKLHLGH). Positions 524–528 (KMSKS) match the 'KMSKS' region motif. Position 527 (K527) interacts with ATP. Residues 808–879 (LAGLINIEEE…VKERIAQLRS (72 aa)) are a coiled coil.

It belongs to the class-I aminoacyl-tRNA synthetase family. ValS type 1 subfamily. In terms of assembly, monomer.

The protein localises to the cytoplasm. The catalysed reaction is tRNA(Val) + L-valine + ATP = L-valyl-tRNA(Val) + AMP + diphosphate. Catalyzes the attachment of valine to tRNA(Val). As ValRS can inadvertently accommodate and process structurally similar amino acids such as threonine, to avoid such errors, it has a 'posttransfer' editing activity that hydrolyzes mischarged Thr-tRNA(Val) in a tRNA-dependent manner. This Enterococcus faecalis (strain ATCC 700802 / V583) protein is Valine--tRNA ligase.